Consider the following 199-residue polypeptide: 7-methyl-GTP pyrophosphatase (199 aa).

Residue aspartate 76 is the Proton acceptor of the active site.

It belongs to the Maf family. YceF subfamily. A divalent metal cation is required as a cofactor.

Its subcellular location is the cytoplasm. It catalyses the reaction N(7)-methyl-GTP + H2O = N(7)-methyl-GMP + diphosphate + H(+). Its function is as follows. Nucleoside triphosphate pyrophosphatase that hydrolyzes 7-methyl-GTP (m(7)GTP). May have a dual role in cell division arrest and in preventing the incorporation of modified nucleotides into cellular nucleic acids. This chain is 7-methyl-GTP pyrophosphatase, found in Rhizobium johnstonii (strain DSM 114642 / LMG 32736 / 3841) (Rhizobium leguminosarum bv. viciae).